The primary structure comprises 786 residues: MSYKNTNNSHLILFKLLLLLILYSADLTASSSCRSECGGCKCGGIAIPYPFGIGKGCYLEKSYEIECLNTSGKLVPFLSVISKEVVSIHLPGRQSFGSVRVRSPITSAGCSSDGKDSAPVMNLTDSPFFVSDINNLVGVGCSSKVSLEHIKQNMVGCELNCSTTNASDSNSIPFFDKTGCSFSYTFAQVCTGNKPEDMGCDGRGCCQASLPREPQQVIGIRIESNDGKSTTSGDCRVAFLTDEFFSLSKLTKPEQLHAKRYATLSLGWIMQTRNTSFVNSLACKIRKDTDTAYSNDQSIKCICDYTMSIISDIRYANCECNLGYKGNPYDSDGCRDIDECKENPKYCKETDTCVNFEGGYRCVGDKTKAIMIGAGTGFGVLVLVGGVWWLRKFLVKRRMAKRKKKFFKRNGGLLLQQELNTRQGVVEKARIFTSKELEKATENFSENRVLGHGGQGTVYKGMLVDGRTVAVKKSKVIDEDKLQEFINEVVILSQINHRHVVKLLGCCLETEVPILVYEFIINGNLFKHIHEEEADDYTMIWGMRLRIAVDIAGALSYLHSAASSPIYHRDIKSTNILLDEKYRAKVADFGTSRSVTIDQTHWTTVISGTVGYVDPEYYRSSQYTEKSDVYSFGVILAELITGDKPVIMVQNTQEIIALAEHFRVAMKERRLSDIMDARIRDDSKPEQVMAVANLAMKCLSSRGRNRPNMREVFTELERICTSPEDSQVQNRIDEEEEEDGVEEEEEVVTIVHRGDSWSIGVTAPASSIVASPPSSDVEPLNPLLTW.

Residues 1–30 form the signal peptide; it reads MSYKNTNNSHLILFKLLLLLILYSADLTAS. Over 31–369 the chain is Extracellular; it reads SSCRSECGGC…YRCVGDKTKA (339 aa). N-linked (GlcNAc...) asparagine glycans are attached at residues Asn-69, Asn-122, Asn-160, Asn-165, and Asn-274. The tract at residues 301 to 362 is atypical EGF-like; the sequence is CICDYTMSII…CVNFEGGYRC (62 aa). 3 disulfides stabilise this stretch: Cys-303–Cys-318, Cys-340–Cys-353, and Cys-347–Cys-362. A helical transmembrane segment spans residues 370 to 390; sequence IMIGAGTGFGVLVLVGGVWWL. Residues 391 to 786 lie on the Cytoplasmic side of the membrane; it reads RKFLVKRRMA…VEPLNPLLTW (396 aa). Phosphothreonine is present on Thr-433. Residues 444–719 form the Protein kinase domain; the sequence is FSENRVLGHG…REVFTELERI (276 aa). Residues 450–458 and Lys-472 each bind ATP; that span reads LGHGGQGTV. Phosphotyrosine is present on Tyr-517. The active-site Proton acceptor is the Asp-570. Phosphothreonine occurs at positions 604 and 609. Position 617 is a phosphotyrosine (Tyr-617). A compositionally biased stretch (low complexity) spans 766 to 775; sequence SSIVASPPSS. Residues 766–786 form a disordered region; the sequence is SSIVASPPSSDVEPLNPLLTW.

This sequence belongs to the protein kinase superfamily. Ser/Thr protein kinase family.

It is found in the membrane. It catalyses the reaction L-seryl-[protein] + ATP = O-phospho-L-seryl-[protein] + ADP + H(+). The catalysed reaction is L-threonyl-[protein] + ATP = O-phospho-L-threonyl-[protein] + ADP + H(+). Functionally, serine/threonine-protein kinase that may function as a signaling receptor of extracellular matrix component. This Arabidopsis thaliana (Mouse-ear cress) protein is Wall-associated receptor kinase-like 17 (WAKL17).